A 249-amino-acid chain; its full sequence is uncharacterized protein (249 aa).

Residue 11 to 34 (IFGGRSQIGGELARRLAAGATMVL) participates in NADP(+) binding. Ser-142 serves as a coordination point for substrate. The active-site Proton acceptor is the Tyr-155.

This sequence belongs to the short-chain dehydrogenases/reductases (SDR) family.

This is an uncharacterized protein from Mycobacterium tuberculosis (strain ATCC 25618 / H37Rv).